Reading from the N-terminus, the 392-residue chain is Succinyl-diaminopimelate desuccinylase (392 aa).

Position 78 (His78) interacts with Zn(2+). Asp80 is a catalytic residue. A Zn(2+)-binding site is contributed by Asp110. Catalysis depends on Glu145, which acts as the Proton acceptor. Glu146, Glu174, and His363 together coordinate Zn(2+).

The protein belongs to the peptidase M20A family. DapE subfamily. Homodimer. Zn(2+) is required as a cofactor. The cofactor is Co(2+).

The catalysed reaction is N-succinyl-(2S,6S)-2,6-diaminopimelate + H2O = (2S,6S)-2,6-diaminopimelate + succinate. The protein operates within amino-acid biosynthesis; L-lysine biosynthesis via DAP pathway; LL-2,6-diaminopimelate from (S)-tetrahydrodipicolinate (succinylase route): step 3/3. Catalyzes the hydrolysis of N-succinyl-L,L-diaminopimelic acid (SDAP), forming succinate and LL-2,6-diaminopimelate (DAP), an intermediate involved in the bacterial biosynthesis of lysine and meso-diaminopimelic acid, an essential component of bacterial cell walls. This is Succinyl-diaminopimelate desuccinylase from Methylobacterium radiotolerans (strain ATCC 27329 / DSM 1819 / JCM 2831 / NBRC 15690 / NCIMB 10815 / 0-1).